The following is a 331-amino-acid chain: Light-harvesting complex I LH35 proteins (331 aa).

The protein resides in the plastid. It localises to the chloroplast. This chain is Light-harvesting complex I LH35 proteins, found in Euglena gracilis.